The following is a 220-amino-acid chain: Probable cytidylate kinase (220 aa).

10-18 provides a ligand contact to ATP; the sequence is GPAASGKSS.

Belongs to the cytidylate kinase family. Type 1 subfamily.

The enzyme catalyses CMP + ATP = CDP + ADP. It catalyses the reaction dCMP + ATP = dCDP + ADP. The sequence is that of Probable cytidylate kinase from Encephalitozoon cuniculi (strain GB-M1) (Microsporidian parasite).